The primary structure comprises 366 residues: N-acetyl-6-hydroxytryptophan oxidase ivoB (366 aa).

The N-terminal stretch at 1-18 (MHLLSSLAALAAAITVAF) is a signal peptide. Asparagine 28 and asparagine 81 each carry an N-linked (GlcNAc...) asparagine glycan. Cu cation-binding residues include histidine 87 and histidine 96. N-linked (GlcNAc...) asparagine glycans are attached at residues asparagine 114 and asparagine 121. Position 291 (histidine 291) interacts with Cu cation. The N-linked (GlcNAc...) asparagine glycan is linked to asparagine 319.

It belongs to the tyrosinase family. Requires Cu(2+) as cofactor.

The protein operates within pigment biosynthesis. Its activity is regulated as follows. Activity is inhibited by 2,3-dihydroxynaphthalene, phenylhydrazine, diethyl dithiocarbamate and 8-hydroxyquinolene. Nonribosomal peptide synthetase; part of the pathway that mediates the biosynthesis of the gray-brown conidiophore pigment. The first step of the pathway is performed by the nonribosomal peptide synthetase ivoA that catalyzes ATP-dependent unidirectional stereoinversion of L-tryptophan to D-tryptophan with complete conversion. While the stereoinversion is catalyzed by the epimerization (E) domain of ivoA, the terminal condensation (C) domain stereoselectively hydrolyzes D-tryptophanyl-S-phosphopantetheine thioester and thus represents a non-canonical C domain function. D-tryptophan is acetylated, probably by an endogenous acetyltransferase. N-acetyltryptophan is further 6-hydroxylated into N-acetyl-6-hydroxytryptophan (AHT) by the cytochrome P450 monooxygenase ivoC. N-acetyl-6-hydroxytryptophan is substrate of the N-acetyl-6-hydroxytryptophan oxidase ivoB to produce the gray-brown conidiophore pigment. The chain is N-acetyl-6-hydroxytryptophan oxidase ivoB from Emericella nidulans (strain FGSC A4 / ATCC 38163 / CBS 112.46 / NRRL 194 / M139) (Aspergillus nidulans).